The sequence spans 273 residues: 2,3,4,5-tetrahydropyridine-2,6-dicarboxylate N-succinyltransferase (273 aa).

Positions 104 and 141 each coordinate substrate.

This sequence belongs to the transferase hexapeptide repeat family. Homotrimer.

The protein localises to the cytoplasm. It carries out the reaction (S)-2,3,4,5-tetrahydrodipicolinate + succinyl-CoA + H2O = (S)-2-succinylamino-6-oxoheptanedioate + CoA. Its pathway is amino-acid biosynthesis; L-lysine biosynthesis via DAP pathway; LL-2,6-diaminopimelate from (S)-tetrahydrodipicolinate (succinylase route): step 1/3. The chain is 2,3,4,5-tetrahydropyridine-2,6-dicarboxylate N-succinyltransferase from Nitrosospira multiformis (strain ATCC 25196 / NCIMB 11849 / C 71).